We begin with the raw amino-acid sequence, 100 residues long: Integration host factor subunit alpha (100 aa).

Residues 54-73 (DLRDKRQRPGRNPKTGEEIP) form a disordered region.

The protein belongs to the bacterial histone-like protein family. Heterodimer of an alpha and a beta chain.

Functionally, this protein is one of the two subunits of integration host factor, a specific DNA-binding protein that functions in genetic recombination as well as in transcriptional and translational control. This Pseudomonas savastanoi pv. phaseolicola (strain 1448A / Race 6) (Pseudomonas syringae pv. phaseolicola (strain 1448A / Race 6)) protein is Integration host factor subunit alpha.